A 319-amino-acid polypeptide reads, in one-letter code: Replication factor C small subunit (319 aa).

45–52 (GPPGTGKT) contributes to the ATP binding site.

The protein belongs to the activator 1 small subunits family. RfcS subfamily. Heteropentamer composed of four small subunits (RfcS) and one large subunit (RfcL). Both subunits interact with PCNA.

In terms of biological role, part of the RFC clamp loader complex which loads the PCNA sliding clamp onto DNA. The complex possesses DNA-dependent ATPase activity which is further stimulated by PCNA. This chain is Replication factor C small subunit (rfcS), found in Archaeoglobus fulgidus (strain ATCC 49558 / DSM 4304 / JCM 9628 / NBRC 100126 / VC-16).